Consider the following 236-residue polypeptide: Purine nucleoside phosphorylase DeoD-type (236 aa).

His4 provides a ligand contact to a purine D-ribonucleoside. Phosphate-binding positions include Gly20, Arg24, Arg43, and 87–90; that span reads RVGT. A purine D-ribonucleoside contacts are provided by residues 179–181 and 203–204; these read EME and SD. Asp204 serves as the catalytic Proton donor.

It belongs to the PNP/UDP phosphorylase family. In terms of assembly, homohexamer; trimer of homodimers.

It catalyses the reaction a purine D-ribonucleoside + phosphate = a purine nucleobase + alpha-D-ribose 1-phosphate. The enzyme catalyses a purine 2'-deoxy-D-ribonucleoside + phosphate = a purine nucleobase + 2-deoxy-alpha-D-ribose 1-phosphate. Catalyzes the reversible phosphorolytic breakdown of the N-glycosidic bond in the beta-(deoxy)ribonucleoside molecules, with the formation of the corresponding free purine bases and pentose-1-phosphate. The chain is Purine nucleoside phosphorylase DeoD-type from Streptococcus thermophilus (strain ATCC BAA-491 / LMD-9).